The primary structure comprises 494 residues: Alpha-amylase-related protein (494 aa).

An N-terminal signal peptide occupies residues 1-20 (MFKFALALTLCLAGASLSLA). Pyrrolidone carboxylic acid is present on glutamine 21. Cysteine 48 and cysteine 104 are joined by a disulfide. Asparagine 118, glutamine 169, and aspartate 178 together coordinate Ca(2+). An intrachain disulfide couples cysteine 157 to cysteine 171. Arginine 206 is a chloride binding site. The active-site Nucleophile is aspartate 208. Residue histidine 212 participates in Ca(2+) binding. Glutamate 245 functions as the Proton donor in the catalytic mechanism. Positions 308 and 343 each coordinate chloride. 3 disulfide bridges follow: cysteine 376/cysteine 382, cysteine 418/cysteine 441, and cysteine 448/cysteine 460.

It belongs to the glycosyl hydrolase 13 family. In terms of assembly, monomer. Ca(2+) serves as cofactor. It depends on chloride as a cofactor.

The protein localises to the secreted. The catalysed reaction is Endohydrolysis of (1-&gt;4)-alpha-D-glucosidic linkages in polysaccharides containing three or more (1-&gt;4)-alpha-linked D-glucose units.. The sequence is that of Alpha-amylase-related protein (Amyrel) from Drosophila dossoui (Fruit fly).